The primary structure comprises 146 residues: VHLTGEEKSAVAALWGKVNVDEVGGEALGRLLVVYPWTQRFFESFGALSTPDAVMGNPKVKAHGKKVLGAFSDGLAHLDNLKGTFAQLSELHCDKLHVDPENFRLLGNVLVCVLARNFGKEFTPQVQAAFQKVVAGVATALAHKYH.

Positions 2-146 (HLTGEEKSAV…VATALAHKYH (145 aa)) constitute a Globin domain. Heme b contacts are provided by histidine 63 and histidine 92.

This sequence belongs to the globin family. Heterotetramer of two delta chains and two alpha chains. In terms of tissue distribution, red blood cells.

The chain is Hemoglobin subunit delta (HBD) from Ateles fusciceps (Brown-headed spider monkey).